A 112-amino-acid chain; its full sequence is Large ribosomal subunit protein uL1 (112 aa).

The protein belongs to the universal ribosomal protein uL1 family.

The sequence is that of Large ribosomal subunit protein uL1 (rpl-10a) from Caenorhabditis remanei (Caenorhabditis vulgaris).